Here is a 160-residue protein sequence, read N- to C-terminus: 2-C-methyl-D-erythritol 2,4-cyclodiphosphate synthase (160 aa).

A divalent metal cation is bound by residues Asp-10 and His-12. 4-CDP-2-C-methyl-D-erythritol 2-phosphate contacts are provided by residues 10 to 12 (DVH) and 36 to 37 (HS). His-44 serves as a coordination point for a divalent metal cation. Residues 58–60 (DIG), 134–137 (TTTE), Phe-141, and Arg-144 each bind 4-CDP-2-C-methyl-D-erythritol 2-phosphate.

It belongs to the IspF family. In terms of assembly, homotrimer. Requires a divalent metal cation as cofactor.

The catalysed reaction is 4-CDP-2-C-methyl-D-erythritol 2-phosphate = 2-C-methyl-D-erythritol 2,4-cyclic diphosphate + CMP. It functions in the pathway isoprenoid biosynthesis; isopentenyl diphosphate biosynthesis via DXP pathway; isopentenyl diphosphate from 1-deoxy-D-xylulose 5-phosphate: step 4/6. In terms of biological role, involved in the biosynthesis of isopentenyl diphosphate (IPP) and dimethylallyl diphosphate (DMAPP), two major building blocks of isoprenoid compounds. Catalyzes the conversion of 4-diphosphocytidyl-2-C-methyl-D-erythritol 2-phosphate (CDP-ME2P) to 2-C-methyl-D-erythritol 2,4-cyclodiphosphate (ME-CPP) with a corresponding release of cytidine 5-monophosphate (CMP). The protein is 2-C-methyl-D-erythritol 2,4-cyclodiphosphate synthase of Phocaeicola vulgatus (strain ATCC 8482 / DSM 1447 / JCM 5826 / CCUG 4940 / NBRC 14291 / NCTC 11154) (Bacteroides vulgatus).